The following is a 541-amino-acid chain: Paromamine 6'-oxidase (541 aa).

The segment at 1 to 29 is disordered; the sequence is MKRLRGTLPSDARHAWHPEPLGPAHRDGW. The active-site Proton acceptor is His470.

Belongs to the GMC oxidoreductase family. Requires FAD as cofactor.

The enzyme catalyses 6'''-deamino-6'''-hydroxyneomycin C + O2 = 6'''-deamino-6'''-oxoneomycin C + H2O2. The catalysed reaction is paromamine + O2 = 6'-oxoparomamine + H2O2. It functions in the pathway antibiotic biosynthesis; neomycin biosynthesis. Glucosaminyl-6'-oxidase involved in the biosynthetic pathway of neomycin by mediating FAD-dependent dehydrogenation of paromamine to 6'-dehydro-6'-oxoparomamine. Works in combination with neamine transaminase to replace the 6-hydroxy group of paromamine with an amino group. Also able to collaborate with neomycin C transaminase to replace the 6'''-hydroxy group of 6'''-hydroxyneomycin C with an amino group. The chain is Paromamine 6'-oxidase (neoG) from Streptomyces fradiae (Streptomyces roseoflavus).